Reading from the N-terminus, the 73-residue chain is Carboxysome shell vertex protein CsoS4B (73 aa).

The region spanning 1-68 is the BMV domain; the sequence is MVCTQRVAGL…TDLTIGGIID (68 aa).

Belongs to the CcmL/EutN family. CsoS4 subfamily. As to quaternary structure, homopentamer.

The protein resides in the carboxysome. Functionally, probably forms vertices in the carboxysome, a polyhedral inclusion where RuBisCO (ribulose bisphosphate carboxylase, cbbL-cbbS) is sequestered. Has been modeled to induce curvature upon insertion into an otherwise flat hexagonal layer of major carboxysome subunits. Has not been identified in purified carboxysomes; it is expected to be present in very low amounts. This Prochlorococcus marinus subsp. pastoris (strain CCMP1986 / NIES-2087 / MED4) protein is Carboxysome shell vertex protein CsoS4B.